Consider the following 517-residue polypeptide: Cytochrome P450 monooxygenase calE (517 aa).

A glycan (N-linked (GlcNAc...) asparagine) is linked at Asn-8. A helical membrane pass occupies residues 14-34 (SLMHHYILIAILVASIIAMVV). Cys-458 provides a ligand contact to heme.

It belongs to the cytochrome P450 family. It depends on heme as a cofactor.

Its subcellular location is the membrane. It participates in secondary metabolite biosynthesis. Its function is as follows. Cytochrome P450 monooxygenase; part of the gene cluster that mediates the biosynthesis of calbistrin A and related compounds. Calbistrin A is a secondary metabolite with an interesting structure that was recently found to have bioactivity against leukemia cells. It consists of two polyketides linked by an ester bond: a bicyclic decalin containing polyketide and a linear 12 carbon dioic acid structure. The polyketide synthase calA is probably responsible for forming the decalin moiety. Because calA lacks a designated enoylreductase (ER) domain, the required activity is provided by the trans-enoyl reductase calK. Following release from the PKS, calF then probably catalyzes the oxidation and the subsequent Diels Alder cycloisomerization that lead to the formation of the decalin moiety. The decalin polyketide backbone includes two C-methyl groups, at C7 and C11 in backbone, of which the C7 position is probably methylated by the methyltransferase domain of calA. A candidate for adding the methyl group at C11, if not done by CalA, is the cluster methyltransferase calH. Several additional tailoring enzymes within the cluster could be involved in the modification of the decalin polyketide product. Those include the 3 cytochrome P450 monooxygenases CalE, CalG and CalL, of which one might be responsible for the introduction of the extra hydroxyl group attached to the backbone of the decalin moiety, at position C9 in the backbone, that allows for attachment of the linear moiety. One tailoring enzyme activity that is expected to be involved in biosynthesis of calbistrin is an acyltransferase for connecting the two polyketide synthase products, and which could be performed by the cluster acyltransferase calJ. The enzyme responsible for the biosynthesis of the linear moiety, probably a second PKS, has not been identified yet. This chain is Cytochrome P450 monooxygenase calE, found in Penicillium decumbens.